Here is a 300-residue protein sequence, read N- to C-terminus: Probable alpha-L-glutamate ligase (300 aa).

One can recognise an ATP-grasp domain in the interval 104 to 287 (LQLLARQGID…IAGRMIEYIE (184 aa)). ATP contacts are provided by residues Lys141, 178-179 (EY), Asp187, and 211-213 (RSN). 3 residues coordinate Mg(2+): Asp248, Glu260, and Asn262. Residues Asp248, Glu260, and Asn262 each contribute to the Mn(2+) site.

The protein belongs to the RimK family. The cofactor is Mg(2+). Mn(2+) serves as cofactor.

The polypeptide is Probable alpha-L-glutamate ligase (Serratia proteamaculans (strain 568)).